Reading from the N-terminus, the 126-residue chain is Glycine cleavage system H protein (126 aa).

Residues Thr-24–Lys-105 form the Lipoyl-binding domain. Lys-65 is subject to N6-lipoyllysine.

The protein belongs to the GcvH family. As to quaternary structure, the glycine cleavage system is composed of four proteins: P, T, L and H. The cofactor is (R)-lipoate.

In terms of biological role, the glycine cleavage system catalyzes the degradation of glycine. The H protein shuttles the methylamine group of glycine from the P protein to the T protein. The polypeptide is Glycine cleavage system H protein (Burkholderia vietnamiensis (strain G4 / LMG 22486) (Burkholderia cepacia (strain R1808))).